A 250-amino-acid polypeptide reads, in one-letter code: Probable chemoreceptor glutamine deamidase CheD (250 aa).

The protein belongs to the CheD family.

The catalysed reaction is L-glutaminyl-[protein] + H2O = L-glutamyl-[protein] + NH4(+). Functionally, probably deamidates glutamine residues to glutamate on methyl-accepting chemotaxis receptors (MCPs), playing an important role in chemotaxis. This Paraburkholderia xenovorans (strain LB400) protein is Probable chemoreceptor glutamine deamidase CheD.